A 1256-amino-acid polypeptide reads, in one-letter code: Bifunctional autolysin (1256 aa).

Positions 1–29 (MAKKFNYKLPSMVALTLVGSAVTAHQVQA) are cleaved as a signal peptide. Residues 103–138 (GDTRANQSATTNNTQPVAKSTSTTAPKTNTNVTNAG) show a composition bias toward polar residues. Disordered stretches follow at residues 103 to 151 (GDTR…NSEN), 172 to 214 (KTAA…KTSL), and 419 to 440 (TQST…PSTG). 2 stretches are compositionally biased toward low complexity: residues 172–196 (KTAA…KVTT) and 421–439 (STTT…KPST). The tract at residues 199–775 (ASAQPRSVAA…AVAQPKTAVK (577 aa)) is N-acetylmuramoyl-L-alanine amidase. GW domains lie at 443–517 (TVAA…YNTA), 519–593 (SPVN…DTAK), 612–686 (TVSS…YNNA), 688–762 (SPVN…VPAA), 784–859 (TTQT…VQNL), 861–936 (KEVK…APTA), and 943–1017 (AAKD…KELI). The endo-beta-N-acetylglucosaminidase stretch occupies residues 776-1256 (AYTVTKPQTT…GKYFDIPQYK (481 aa)).

The protein in the N-terminal section; belongs to the N-acetylmuramoyl-L-alanine amidase 2 family. It in the C-terminal section; belongs to the glycosyl hydrolase 73 family. As to quaternary structure, oligomer; forms a ring structure at the cell surface which is important for efficient partitioning of daughter cells after cell division. In terms of processing, undergoes proteolytic processing to generate the two extracellular lytic enzymes, probably at the septal region on the cell surface.

The protein resides in the secreted. It carries out the reaction Hydrolyzes the link between N-acetylmuramoyl residues and L-amino acid residues in certain cell-wall glycopeptides.. It catalyses the reaction an N(4)-(oligosaccharide-(1-&gt;3)-[oligosaccharide-(1-&gt;6)]-beta-D-Man-(1-&gt;4)-beta-D-GlcNAc-(1-&gt;4)-alpha-D-GlcNAc)-L-asparaginyl-[protein] + H2O = an oligosaccharide-(1-&gt;3)-[oligosaccharide-(1-&gt;6)]-beta-D-Man-(1-&gt;4)-D-GlcNAc + N(4)-(N-acetyl-beta-D-glucosaminyl)-L-asparaginyl-[protein]. Functionally, endohydrolysis of the di-N-acetylchitobiosyl unit in high-mannose glycopeptides and glycoproteins containing the -[(Man)5(GlcNAc)2]-Asn structure. One N-acetyl-D-glucosamine residue remains attached to the protein; the rest of the oligosaccharide is released intact. Cleaves the peptidoglycan connecting the daughter cells at the end of the cell division cycle, resulting in the separation of the two newly divided cells. Acts as an autolysin in penicillin-induced lysis. This Staphylococcus aureus (strain NCTC 8325 / PS 47) protein is Bifunctional autolysin (atl).